The chain runs to 244 residues: 6-carboxyhexanoate--CoA ligase (244 aa).

This sequence belongs to the BioW family. As to quaternary structure, homodimer. The cofactor is Mg(2+).

The catalysed reaction is heptanedioate + ATP + CoA = 6-carboxyhexanoyl-CoA + AMP + diphosphate. It participates in metabolic intermediate metabolism; pimeloyl-CoA biosynthesis; pimeloyl-CoA from pimelate: step 1/1. Functionally, catalyzes the transformation of pimelate into pimeloyl-CoA with concomitant hydrolysis of ATP to AMP. The sequence is that of 6-carboxyhexanoate--CoA ligase from Methanococcus maripaludis (strain C7 / ATCC BAA-1331).